The chain runs to 108 residues: Insulin (108 aa).

A signal peptide spans 1–21 (MAVWLQAGALLVLLVVSSVST). Cystine bridges form between Cys-30/Cys-94, Cys-42/Cys-107, and Cys-93/Cys-98. Positions 54 to 84 (DVEPLLGFLPPKSAQETEVADFAFKDHAELI) are cleaved as a propeptide — c peptide.

The protein belongs to the insulin family. As to quaternary structure, heterodimer of a B chain and an A chain linked by two disulfide bonds.

Its subcellular location is the secreted. In terms of biological role, insulin decreases blood glucose concentration. It increases cell permeability to monosaccharides, amino acids and fatty acids. It accelerates glycolysis, the pentose phosphate cycle, and glycogen synthesis in liver. The polypeptide is Insulin (ins) (Danio rerio (Zebrafish)).